The following is a 291-amino-acid chain: MIPIQLTVFFMIIYVLESLTIIVQSSLIVAVLGREWLQVRRLMPVDMILISLGISRFCLQWASMLNNFCSYLNLNYVLCNLTITWEFFNILTFWLNSLLTVFYCIKVSSFTHHIFLWVRWRILRWFPWILLGSLTIACVTIIPSAIGNYIQIQLLTMEHLPRNSTVTDRLEKFHQYQFQSHTVALVIPFILFLASTILLMASLTKQIQHHSTGHCNPSMKAHFTALRSLAILFIVFTSYFLIILITIIGTLFDKRCWLWVWEAFVYAFILMHSTSLMLSSPTLKRILKGKC.

Residue Met1 is a topological domain, extracellular. Residues 2–22 form a helical membrane-spanning segment; that stretch reads IPIQLTVFFMIIYVLESLTII. At 23-41 the chain is on the cytoplasmic side; the sequence is VQSSLIVAVLGREWLQVRR. Residues 42–62 traverse the membrane as a helical segment; that stretch reads LMPVDMILISLGISRFCLQWA. At 63-84 the chain is on the extracellular side; it reads SMLNNFCSYLNLNYVLCNLTIT. An N-linked (GlcNAc...) asparagine glycan is attached at Asn80. The helical transmembrane segment at 85 to 105 threads the bilayer; that stretch reads WEFFNILTFWLNSLLTVFYCI. At 106-125 the chain is on the cytoplasmic side; the sequence is KVSSFTHHIFLWVRWRILRW. Residues 126-146 form a helical membrane-spanning segment; that stretch reads FPWILLGSLTIACVTIIPSAI. At 147–182 the chain is on the extracellular side; that stretch reads GNYIQIQLLTMEHLPRNSTVTDRLEKFHQYQFQSHT. N-linked (GlcNAc...) asparagine glycosylation is present at Asn163. Residues 183 to 203 form a helical membrane-spanning segment; that stretch reads VALVIPFILFLASTILLMASL. Over 204-228 the chain is Cytoplasmic; that stretch reads TKQIQHHSTGHCNPSMKAHFTALRS. The chain crosses the membrane as a helical span at residues 229–249; it reads LAILFIVFTSYFLIILITIIG. Residues 250-257 lie on the Extracellular side of the membrane; that stretch reads TLFDKRCW. A helical membrane pass occupies residues 258–278; the sequence is LWVWEAFVYAFILMHSTSLML. Residues 279 to 291 are Cytoplasmic-facing; that stretch reads SSPTLKRILKGKC.

This sequence belongs to the G-protein coupled receptor T2R family. Interacts with RTP3 and RTP4.

The protein resides in the cell membrane. Its function is as follows. Receptor that may play a role in the perception of bitterness and is gustducin-linked. May function as a bitter taste receptor for the phytonutrient beta glucopyranosides, some of which are toxic and some of which lower the risk of cancer and cardiovascular disease. The activity of this receptor may stimulate alpha gustducin, mediate PLC-beta-2 activation and lead to the gating of TRPM5. This is Taste receptor type 2 member 16 (TAS2R16) from Pongo pygmaeus (Bornean orangutan).